Here is a 450-residue protein sequence, read N- to C-terminus: Glucose-6-phosphate isomerase (450 aa).

Glutamate 290 acts as the Proton donor in catalysis. Residues histidine 311 and lysine 425 contribute to the active site.

The protein belongs to the GPI family.

It localises to the cytoplasm. The enzyme catalyses alpha-D-glucose 6-phosphate = beta-D-fructose 6-phosphate. Its pathway is carbohydrate biosynthesis; gluconeogenesis. It functions in the pathway carbohydrate degradation; glycolysis; D-glyceraldehyde 3-phosphate and glycerone phosphate from D-glucose: step 2/4. Its function is as follows. Catalyzes the reversible isomerization of glucose-6-phosphate to fructose-6-phosphate. This chain is Glucose-6-phosphate isomerase, found in Leuconostoc mesenteroides subsp. mesenteroides (strain ATCC 8293 / DSM 20343 / BCRC 11652 / CCM 1803 / JCM 6124 / NCDO 523 / NBRC 100496 / NCIMB 8023 / NCTC 12954 / NRRL B-1118 / 37Y).